A 449-amino-acid polypeptide reads, in one-letter code: Chitobiosyldiphosphodolichol beta-mannosyltransferase (449 aa).

The Lumenal segment spans residues 1–7 (MFLEIPR). A helical transmembrane segment spans residues 8–28 (WLLALIILYLSIPLVVYYVIP). Residues 21 to 32 (LVVYYVIPYLFY) carry the Dolichol recognition motif. Residues 29–104 (YLFYGNKSTK…SNLKRKGGGT (76 aa)) are Cytoplasmic-facing. Positions 105 to 125 (SVIFMVKKVLFQVLSIFKLLW) form an intramembrane region, helical. At 126–449 (ELRGSDYILV…RTMRDLKLIH (324 aa)) the chain is on the cytoplasmic side. Positions 435–449 (QSNWERTMRDLKLIH) are required for oligomerization.

It belongs to the glycosyltransferase group 1 family. Glycosyltransferase 33 subfamily. In terms of assembly, homodimer. ALG1 forms mannosyltransferases (MT) heteromeric complexes with either ALG2 or ALG11.

It is found in the endoplasmic reticulum membrane. The enzyme catalyses an N,N'-diacetylchitobiosyl-diphospho-di-trans,poly-cis-dolichol + GDP-alpha-D-mannose = a beta-D-Man-(1-&gt;4)-beta-D-GlcNAc-(1-&gt;4)-alpha-D-GlcNAc-diphospho-di-trans,poly-cis-dolichol + GDP + H(+). Its pathway is protein modification; protein glycosylation. In terms of biological role, participates in the formation of the lipid-linked precursor oligosaccharide for N-glycosylation. Involved in assembling the dolichol-pyrophosphate-GlcNAc(2)-Man(5) intermediate on the cytoplasmic surface of the ER. The polypeptide is Chitobiosyldiphosphodolichol beta-mannosyltransferase (ALG1) (Saccharomyces cerevisiae (strain ATCC 204508 / S288c) (Baker's yeast)).